The following is a 609-amino-acid chain: Hemagglutinin/proteinase (609 aa).

A signal peptide spans 1 to 24 (MKMIQRPLNWLVLAGAATGFPLYA). A propeptide spanning residues 25-196 (AQMVTIDDAS…LDQWDGINHA (172 aa)) is cleaved from the precursor. Zn(2+) is bound at residue histidine 343. Glutamate 344 is a catalytic residue. The Zn(2+) site is built by histidine 347 and glutamate 367. Histidine 426 functions as the Proton donor in the catalytic mechanism.

The protein belongs to the peptidase M4 family. Zn(2+) is required as a cofactor.

The protein resides in the secreted. Functionally, may play a role in the pathogenesis of cholera. Hap nicks and activates the A subunit of cholera enterotoxin and related enterotoxins. This is Hemagglutinin/proteinase (hap) from Vibrio cholerae serotype O1 (strain ATCC 39315 / El Tor Inaba N16961).